The following is a 167-amino-acid chain: NADH-ubiquinone oxidoreductase chain 6 (167 aa).

4 helical membrane passes run 5–25 (IIMLSKIFMSSLISMILTIYL), 34–54 (MLLIYLISYSIYMSLMMFTMC), 60–80 (LILMILIVFLSGMLIMFSYFI), and 138–158 (FFIMILMLIITLILMTKITYI).

The protein belongs to the complex I subunit 6 family.

Its subcellular location is the mitochondrion membrane. The enzyme catalyses a ubiquinone + NADH + 5 H(+)(in) = a ubiquinol + NAD(+) + 4 H(+)(out). Functionally, core subunit of the mitochondrial membrane respiratory chain NADH dehydrogenase (Complex I) that is believed to belong to the minimal assembly required for catalysis. Complex I functions in the transfer of electrons from NADH to the respiratory chain. The immediate electron acceptor for the enzyme is believed to be ubiquinone. The sequence is that of NADH-ubiquinone oxidoreductase chain 6 (ND6) from Apis mellifera ligustica (Common honeybee).